The following is a 576-amino-acid chain: Polypeptide N-acetylgalactosaminyltransferase 12 (576 aa).

Residues 1–19 are Cytoplasmic-facing; that stretch reads MWGRAVRRRCPRGLRRGRE. The helical; Signal-anchor for type II membrane protein transmembrane segment at 20 to 37 threads the bilayer; the sequence is ALLALLALAGLGALLRAR. A disordered region spans residues 38–58; sequence SRSGTVDPGPPRTPLPGRHEP. Over 38–576 the chain is Lumenal; that stretch reads SRSGTVDPGP…QRWFFKERMS (539 aa). Intrachain disulfides connect Cys120–Cys353, Cys344–Cys417, Cys453–Cys474, Cys501–Cys516, and Cys542–Cys561. The interval 130 to 239 is catalytic subdomain A; the sequence is LPKTSVVIAF…EGWLEPLLQR (110 aa). Positions 171 and 200 each coordinate substrate. Mn(2+) contacts are provided by Asp223 and His225. The tract at residues 299 to 361 is catalytic subdomain B; that stretch reads VIRSPTMAGG…PCSHVGHVFP (63 aa). Trp330 provides a ligand contact to substrate. His358 contributes to the Mn(2+) binding site. Tyr366 serves as a coordination point for substrate. Residues 440–572 form the Ricin B-type lectin domain; it reads FFGMLQNRGL…NSDNQRWFFK (133 aa).

This sequence belongs to the glycosyltransferase 2 family. GalNAc-T subfamily. It depends on Mn(2+) as a cofactor.

It is found in the golgi apparatus membrane. The catalysed reaction is L-seryl-[protein] + UDP-N-acetyl-alpha-D-galactosamine = a 3-O-[N-acetyl-alpha-D-galactosaminyl]-L-seryl-[protein] + UDP + H(+). It carries out the reaction L-threonyl-[protein] + UDP-N-acetyl-alpha-D-galactosamine = a 3-O-[N-acetyl-alpha-D-galactosaminyl]-L-threonyl-[protein] + UDP + H(+). Its pathway is protein modification; protein glycosylation. Its function is as follows. Catalyzes the initial reaction in O-linked oligosaccharide biosynthesis, the transfer of an N-acetyl-D-galactosamine residue to a serine or threonine residue on the protein receptor. Has activity toward non-glycosylated peptides such as Muc5AC, Muc1a and EA2, and no detectable activity with Muc2 and Muc7. Displays enzymatic activity toward the Gal-NAc-Muc5AC glycopeptide, but no detectable activity to mono-GalNAc-glycosylated Muc1a, Muc2, Muc7 and EA2. May play an important role in the initial step of mucin-type oligosaccharide biosynthesis in digestive organs. In Mus musculus (Mouse), this protein is Polypeptide N-acetylgalactosaminyltransferase 12 (Galnt12).